Here is a 297-residue protein sequence, read N- to C-terminus: 2-phospho-L-lactate transferase (297 aa).

Asp49 serves as a coordination point for 7,8-didemethyl-8-hydroxy-5-deazariboflavin.

The protein belongs to the CofD family. In terms of assembly, homodimer. Mg(2+) serves as cofactor.

It carries out the reaction (2S)-lactyl-2-diphospho-5'-guanosine + 7,8-didemethyl-8-hydroxy-5-deazariboflavin = oxidized coenzyme F420-0 + GMP + H(+). It functions in the pathway cofactor biosynthesis; coenzyme F420 biosynthesis. Catalyzes the transfer of the 2-phospholactate moiety from (2S)-lactyl-2-diphospho-5'-guanosine to 7,8-didemethyl-8-hydroxy-5-deazariboflavin (FO) with the formation of oxidized coenzyme F420-0 and GMP. This chain is 2-phospho-L-lactate transferase, found in Methanospirillum hungatei JF-1 (strain ATCC 27890 / DSM 864 / NBRC 100397 / JF-1).